Consider the following 98-residue polypeptide: Cystatin-B (98 aa).

An N-acetylmethionine modification is found at methionine 1. The short motif at 46-50 is the Secondary area of contact element; sequence QLVAG.

Belongs to the cystatin family. Able to form dimers stabilized by noncovalent forces.

It localises to the cytoplasm. In terms of biological role, this is an intracellular thiol proteinase inhibitor. This chain is Cystatin-B (CSTB), found in Bos taurus (Bovine).